Reading from the N-terminus, the 62-residue chain is Conotoxin Pn-B0151 (62 aa).

Positions 1-22 (MRCLPVFVILLLLIASTPSVDA) are cleaved as a signal peptide. The propeptide occupies 23–48 (LQKTKDDMPLASFHDNVKRILQTLSN).

Belongs to the conotoxin T superfamily. Contains 2 disulfide bonds that can be either 'C1-C3, C2-C4' or 'C1-C4, C2-C3', since these disulfide connectivities have been observed for conotoxins with cysteine framework V (for examples, see AC P0DQQ7 and AC P81755). In terms of tissue distribution, expressed by the venom duct.

It localises to the secreted. This Conus pennaceus (Feathered cone) protein is Conotoxin Pn-B0151.